Here is a 195-residue protein sequence, read N- to C-terminus: Peroxiredoxin bcp1 (195 aa).

Residues 46–168 enclose the Thioredoxin domain; it reads IQVGDVIPDI…SHWIFEKGTG (123 aa). The active-site Cysteine sulfenic acid (-SOH) intermediate is the cysteine 89. A disulfide bond links cysteine 89 and cysteine 94.

It belongs to the peroxiredoxin family. BCP/PrxQ subfamily. In terms of assembly, monomer. In terms of processing, the active site is a conserved redox-active cysteine residue, the peroxidatic cysteine (C(P)), which makes the nucleophilic attack on the peroxide substrate. The peroxide oxidizes the C(P)-SH to cysteine sulfenic acid (C(P)-SOH), which then reacts with another cysteine residue, the resolving cysteine (C(R)), to form a disulfide bridge. The disulfide is subsequently reduced by an appropriate electron donor to complete the catalytic cycle. In this atypical 2-Cys peroxiredoxin, C(R) is present in the same subunit to form an intramolecular disulfide. The disulfide is subsequently reduced by thioredoxin.

It is found in the cytoplasm. The protein resides in the nucleus. The catalysed reaction is a hydroperoxide + [thioredoxin]-dithiol = an alcohol + [thioredoxin]-disulfide + H2O. Functionally, thiol-specific peroxidase that catalyzes the reduction of hydrogen peroxide and organic hydroperoxides to water and alcohols, respectively. Plays a role in cell protection against oxidative stress by detoxifying peroxides and as sensor of hydrogen peroxide-mediated signaling events. Acts as a scavenger of H(2)O(2). The protein is Peroxiredoxin bcp1 (bcp1) of Schizosaccharomyces pombe (strain 972 / ATCC 24843) (Fission yeast).